A 141-amino-acid chain; its full sequence is Large ribosomal subunit protein uL16 (141 aa).

This sequence belongs to the universal ribosomal protein uL16 family. As to quaternary structure, part of the 50S ribosomal subunit.

Functionally, binds 23S rRNA and is also seen to make contacts with the A and possibly P site tRNAs. The protein is Large ribosomal subunit protein uL16 of Campylobacter jejuni subsp. jejuni serotype O:6 (strain 81116 / NCTC 11828).